The following is a 514-amino-acid chain: Alstonine synthase (514 aa).

Residues 4-24 (PQFSCLLPAFFLLVVFLFLLI) form a helical membrane-spanning segment. Residue N428 is glycosylated (N-linked (GlcNAc...) asparagine). Residue C450 coordinates heme.

Belongs to the cytochrome P450 family. Heme is required as a cofactor.

It is found in the membrane. The catalysed reaction is tetrahydroalstonine + A + reduced [NADPH--hemoprotein reductase] + O2 = alstonine + AH2 + oxidized [NADPH--hemoprotein reductase] + 2 H2O + H(+). The protein operates within alkaloid biosynthesis. A cytochrome P450 monooxygenase involved in the biosynthesis of pentacyclic alkaloids natural products such as alstonine, putative antipsychotic compounds. Catalyzes the conversion of tetrahydroalstonine to alstonine. No oxidative activity towards ajmalicine. This is Alstonine synthase from Alstonia scholaris (Dogbane).